Consider the following 189-residue polypeptide: Interferon alpha-7 (189 aa).

The signal sequence occupies residues 1 to 23 (MARSFSLLMVVLVLSYKSICSLG). 2 disulfides stabilise this stretch: C24–C122 and C52–C162.

The protein belongs to the alpha/beta interferon family.

It is found in the secreted. In terms of biological role, produced by macrophages, IFN-alpha have antiviral activities. Interferon stimulates the production of two enzymes: a protein kinase and an oligoadenylate synthetase. This is Interferon alpha-7 (IFNA7) from Homo sapiens (Human).